We begin with the raw amino-acid sequence, 178 residues long: Adenine phosphoribosyltransferase (178 aa).

It belongs to the purine/pyrimidine phosphoribosyltransferase family. In terms of assembly, homodimer.

It is found in the cytoplasm. The catalysed reaction is AMP + diphosphate = 5-phospho-alpha-D-ribose 1-diphosphate + adenine. It participates in purine metabolism; AMP biosynthesis via salvage pathway; AMP from adenine: step 1/1. Functionally, catalyzes a salvage reaction resulting in the formation of AMP, that is energically less costly than de novo synthesis. This chain is Adenine phosphoribosyltransferase, found in Erythrobacter litoralis (strain HTCC2594).